The following is a 388-amino-acid chain: Chorismate synthase (388 aa).

Positions 39 and 45 each coordinate NADP(+). FMN is bound by residues 132–134 (RSS), 251–252 (NA), Gly-296, 311–315 (KPIPT), and Arg-337.

In terms of assembly, homotetramer. FMNH2 serves as cofactor.

The catalysed reaction is 5-O-(1-carboxyvinyl)-3-phosphoshikimate = chorismate + phosphate. Its pathway is metabolic intermediate biosynthesis; chorismate biosynthesis; chorismate from D-erythrose 4-phosphate and phosphoenolpyruvate: step 7/7. In terms of biological role, catalyzes the anti-1,4-elimination of the C-3 phosphate and the C-6 proR hydrogen from 5-enolpyruvylshikimate-3-phosphate (EPSP) to yield chorismate, which is the branch point compound that serves as the starting substrate for the three terminal pathways of aromatic amino acid biosynthesis. This reaction introduces a second double bond into the aromatic ring system. This is Chorismate synthase from Staphylococcus aureus.